The following is a 298-amino-acid chain: Lipoyl synthase (298 aa).

7 residues coordinate [4Fe-4S] cluster: Cys-40, Cys-45, Cys-51, Cys-67, Cys-71, Cys-74, and Ser-280. The Radical SAM core domain maps to Ala-53–Ser-269.

This sequence belongs to the radical SAM superfamily. Lipoyl synthase family. The cofactor is [4Fe-4S] cluster.

It is found in the cytoplasm. It catalyses the reaction [[Fe-S] cluster scaffold protein carrying a second [4Fe-4S](2+) cluster] + N(6)-octanoyl-L-lysyl-[protein] + 2 oxidized [2Fe-2S]-[ferredoxin] + 2 S-adenosyl-L-methionine + 4 H(+) = [[Fe-S] cluster scaffold protein] + N(6)-[(R)-dihydrolipoyl]-L-lysyl-[protein] + 4 Fe(3+) + 2 hydrogen sulfide + 2 5'-deoxyadenosine + 2 L-methionine + 2 reduced [2Fe-2S]-[ferredoxin]. It functions in the pathway protein modification; protein lipoylation via endogenous pathway; protein N(6)-(lipoyl)lysine from octanoyl-[acyl-carrier-protein]. Functionally, catalyzes the radical-mediated insertion of two sulfur atoms into the C-6 and C-8 positions of the octanoyl moiety bound to the lipoyl domains of lipoate-dependent enzymes, thereby converting the octanoylated domains into lipoylated derivatives. The polypeptide is Lipoyl synthase (Bacillus cereus (strain G9842)).